A 738-amino-acid chain; its full sequence is 1,4-alpha-glucan branching enzyme GlgB (738 aa).

Aspartate 399 functions as the Nucleophile in the catalytic mechanism. Glutamate 452 (proton donor) is an active-site residue.

It belongs to the glycosyl hydrolase 13 family. GlgB subfamily. As to quaternary structure, monomer.

It carries out the reaction Transfers a segment of a (1-&gt;4)-alpha-D-glucan chain to a primary hydroxy group in a similar glucan chain.. The protein operates within glycan biosynthesis; glycogen biosynthesis. Its function is as follows. Catalyzes the formation of the alpha-1,6-glucosidic linkages in glycogen by scission of a 1,4-alpha-linked oligosaccharide from growing alpha-1,4-glucan chains and the subsequent attachment of the oligosaccharide to the alpha-1,6 position. This is 1,4-alpha-glucan branching enzyme GlgB from Chlamydia trachomatis serovar L2 (strain ATCC VR-902B / DSM 19102 / 434/Bu).